We begin with the raw amino-acid sequence, 222 residues long: Superoxide dismutase [Mn], mitochondrial (222 aa).

The transit peptide at 1-24 (MLCRAACSTGRRLGPVAGAAGSRH) directs the protein to the mitochondrion. Residue His50 participates in Mn(2+) binding. At Tyr58 the chain carries 3'-nitrotyrosine. Lys68 and Lys75 each carry N6-acetyllysine; alternate. 2 positions are modified to N6-succinyllysine; alternate: Lys68 and Lys75. His98 contacts Mn(2+). Lys114 carries the N6-acetyllysine modification. N6-acetyllysine; alternate is present on residues Lys122 and Lys130. N6-succinyllysine; alternate occurs at positions 122 and 130. Mn(2+) is bound by residues Asp183 and His187. An N6-acetyllysine modification is found at Lys202.

The protein belongs to the iron/manganese superoxide dismutase family. As to quaternary structure, homotetramer. The cofactor is Mn(2+). In terms of processing, nitrated under oxidative stress. Nitration coupled with oxidation inhibits the catalytic activity. Post-translationally, acetylation at Lys-122 decreases enzymatic activity. Deacetylated by SIRT3 upon exposure to ionizing radiations or after long fasting. Polyubiquitinated; leading to proteasomal degradation. Deubiquitinated by USP36 which increases protein stability.

The protein resides in the mitochondrion matrix. The catalysed reaction is 2 superoxide + 2 H(+) = H2O2 + O2. Functionally, destroys superoxide anion radicals which are normally produced within the cells and which are toxic to biological systems. This Mus musculus (Mouse) protein is Superoxide dismutase [Mn], mitochondrial (Sod2).